Consider the following 90-residue polypeptide: Serine-rich and transmembrane domain-containing 2 (90 aa).

A glycan (N-linked (GlcNAc...) asparagine) is linked at N11. A helical transmembrane segment spans residues 38 to 58 (YVGLFLSLLAILLILLFTMLL). The disordered stretch occupies residues 69–90 (SDSTESVPQFTDVEMQSRIPTP).

It localises to the membrane. The chain is Serine-rich and transmembrane domain-containing 2 from Homo sapiens (Human).